The sequence spans 321 residues: L-carnitine dehydrogenase (321 aa).

Residue 14–19 (GAGVIG) coordinates NAD(+).

It belongs to the 3-hydroxyacyl-CoA dehydrogenase family. L-carnitine dehydrogenase subfamily. Homodimer.

It localises to the cytoplasm. It carries out the reaction carnitine + NAD(+) = 3-dehydrocarnitine + NADH + H(+). It participates in amine and polyamine metabolism; carnitine metabolism. Functionally, catalyzes the NAD(+)-dependent oxidation of L-carnitine to 3-dehydrocarnitine. The protein is L-carnitine dehydrogenase of Burkholderia mallei (strain ATCC 23344).